The chain runs to 75 residues: Endogenous retrovirus group K member 24 Np9 protein (75 aa).

Residues 22-43 (TAPKRQRPSRTGHDDDGGFVEK) are disordered. A compositionally biased stretch (basic and acidic residues) spans 32 to 43 (TGHDDDGGFVEK).

As to expression, transcript detectable in many tumor cell lines and tumor tissues.

The protein resides in the nucleus. Its function is as follows. May possess a function in tumorigenesis. The sequence is that of Endogenous retrovirus group K member 24 Np9 protein (ERVK-24) from Homo sapiens (Human).